We begin with the raw amino-acid sequence, 126 residues long: Protein ApaG (126 aa).

The ApaG domain occupies 2–126; that stretch reads SALDDSIRVE…FRLALPGLLH (125 aa).

This is Protein ApaG from Shewanella sp. (strain ANA-3).